A 169-amino-acid polypeptide reads, in one-letter code: Disulfide bond formation protein B 1 (169 aa).

At 1–14 (MSDNTLYLRREKRF) the chain is on the cytoplasmic side. Residues 15–31 (LVLLGIICLALIGGALY) traverse the membrane as a helical segment. The Periplasmic portion of the chain corresponds to 32–49 (MQIVLGEAPCPLCILQRY). Cysteine 41 and cysteine 44 are oxidised to a cystine. A helical membrane pass occupies residues 50–64 (ALLFIAIFAFIGAAM). At 65-71 (SGRRGVT) the chain is on the cytoplasmic side. The helical transmembrane segment at 72–89 (VCETLVTLSALGGIAAAG) threads the bilayer. The Periplasmic portion of the chain corresponds to 90–144 (RHVWILAHPSDSCGIDVLQPIVDGLPLATLFPTGFQVSGFCTTPYPPVLGLSLAQ). A disulfide bond links cysteine 102 and cysteine 130. A helical transmembrane segment spans residues 145–163 (WALAAFVLTAVLVPACIIR). Residues 164 to 169 (NRRKPY) lie on the Cytoplasmic side of the membrane.

This sequence belongs to the DsbB family.

Its subcellular location is the cell inner membrane. In terms of biological role, required for disulfide bond formation in some periplasmic proteins. Acts by oxidizing the DsbA protein. In Pseudomonas savastanoi pv. phaseolicola (strain 1448A / Race 6) (Pseudomonas syringae pv. phaseolicola (strain 1448A / Race 6)), this protein is Disulfide bond formation protein B 1.